Here is a 207-residue protein sequence, read N- to C-terminus: Large ribosomal subunit protein uL3 (207 aa).

Belongs to the universal ribosomal protein uL3 family. As to quaternary structure, part of the 50S ribosomal subunit. Forms a cluster with proteins L14 and L19.

Its function is as follows. One of the primary rRNA binding proteins, it binds directly near the 3'-end of the 23S rRNA, where it nucleates assembly of the 50S subunit. This chain is Large ribosomal subunit protein uL3, found in Fervidobacterium nodosum (strain ATCC 35602 / DSM 5306 / Rt17-B1).